An 825-amino-acid polypeptide reads, in one-letter code: NT-3 growth factor receptor (825 aa).

The N-terminal stretch at 1–31 (MDVSLCPAKCSFWRIFLLGSVWLDYVGSVLA) is a signal peptide. Cystine bridges form between Cys32/Cys38 and Cys36/Cys45. Topologically, residues 32 to 429 (CPANCVCSKT…TVTHKPEEDT (398 aa)) are extracellular. N-linked (GlcNAc...) asparagine glycans are attached at residues Asn68, Asn72, and Asn79. 2 LRR repeats span residues 104-125 (GLQK…AFAK) and 128-149 (HLRY…LFQT). Asn133 and Asn163 each carry an N-linked (GlcNAc...) asparagine glycan. In terms of domain architecture, LRRCT spans 160–209 (NFFNCSCDIRWMQLWQEQGEARLDSQSLYCISADGSQLPLFRMNISQCDL). 2 cysteine pairs are disulfide-bonded: Cys164–Cys189 and Cys166–Cys207. Asn203, Asn218, Asn232, Asn259, Asn267, Asn272, and Asn294 each carry an N-linked (GlcNAc...) asparagine glycan. Ig-like C2-type domains are found at residues 210 to 300 (PEIS…VALT) and 309 to 382 (SLVE…IAKN). Cys231 and Cys284 are oxidised to a cystine. An intrachain disulfide couples Cys320 to Cys362. 2 N-linked (GlcNAc...) asparagine glycosylation sites follow: Asn375 and Asn388. Residues 430-453 (FGVSIAVGLAAFACVLLVVLFIMI) form a helical membrane-spanning segment. Residues 454–825 (NKYGRRSKFG…ATPIYLDILG (372 aa)) are Cytoplasmic-facing. Ser493 carries the phosphoserine modification. The residue at position 516 (Tyr516) is a Phosphotyrosine. The Protein kinase domain maps to 538–825 (IVLKRELGEG…ATPIYLDILG (288 aa)). Residues 544–552 (LGEGAFGKV) and Lys572 each bind ATP. Asp679 serves as the catalytic Proton acceptor. Phosphotyrosine; by autocatalysis is present on residues Tyr705, Tyr709, and Tyr710.

The protein belongs to the protein kinase superfamily. Tyr protein kinase family. Insulin receptor subfamily. In terms of assembly, exists in a dynamic equilibrium between monomeric (low affinity) and dimeric (high affinity) structures. Binds SH2B2. Interacts with SQSTM1 and KIDINS220. Interacts with PTPRS. Interacts with MAPK8IP3/JIP3. In terms of processing, ligand-mediated auto-phosphorylation. In terms of tissue distribution, isoform 2 expression is restricted to specific areas in adult brain. Isoform 3 transcripts are readily detected early during embryogenesis and are expressed predominantly in adult brain and gonads.

Its subcellular location is the membrane. The enzyme catalyses L-tyrosyl-[protein] + ATP = O-phospho-L-tyrosyl-[protein] + ADP + H(+). In terms of biological role, receptor tyrosine kinase involved in nervous system and probably heart development. Upon binding of its ligand NTF3/neurotrophin-3, NTRK3 autophosphorylates and activates different signaling pathways, including the phosphatidylinositol 3-kinase/AKT and the MAPK pathways, that control cell survival and differentiation. In Mus musculus (Mouse), this protein is NT-3 growth factor receptor (Ntrk3).